The sequence spans 168 residues: MGSEQNDSTSFSPSEPKLCVKGCGFFGSPSNMNLCSKCYRDIRATEEQTASAKAAVEKSLNPNKPKTQPQQSQEITQGVLGSGSSSSSTRGGDSAAAPLDPPKSTATRCLSCNKKVGVTGFKCRCGSTFCGTHRYPESHECQFDFKGVAREAIAKANPVVKADKVDRI.

The segment at 13 to 47 (PSEPKLCVKGCGFFGSPSNMNLCSKCYRDIRATEE) adopts an A20-type zinc-finger fold. Positions 19, 23, 35, and 38 each coordinate Zn(2+). The interval 49–105 (TASAKAAVEKSLNPNKPKTQPQQSQEITQGVLGSGSSSSSTRGGDSAAAPLDPPKST) is disordered. The segment covering 60 to 76 (LNPNKPKTQPQQSQEIT) has biased composition (polar residues). Over residues 82 to 94 (SGSSSSSTRGGDS) the composition is skewed to low complexity. The AN1-type zinc-finger motif lies at 103 to 149 (KSTATRCLSCNKKVGVTGFKCRCGSTFCGTHRYPESHECQFDFKGVA). Zn(2+)-binding residues include cysteine 109, cysteine 112, cysteine 123, cysteine 125, cysteine 130, histidine 133, histidine 139, and cysteine 141.

Its function is as follows. May be involved in environmental stress response. The chain is Zinc finger A20 and AN1 domain-containing stress-associated protein 1 (SAP1) from Arabidopsis thaliana (Mouse-ear cress).